The following is a 328-amino-acid chain: Malate dehydrogenase (328 aa).

Residue 12–18 (GAAGQIG) participates in NAD(+) binding. Arg95 and Arg101 together coordinate substrate. NAD(+) contacts are provided by residues Asn108, Gln115, and 132–134 (VGN). The substrate site is built by Asn134 and Arg165. The active-site Proton acceptor is the His190.

The protein belongs to the LDH/MDH superfamily. MDH type 2 family.

The catalysed reaction is (S)-malate + NAD(+) = oxaloacetate + NADH + H(+). Catalyzes the reversible oxidation of malate to oxaloacetate. This is Malate dehydrogenase from Methylibium petroleiphilum (strain ATCC BAA-1232 / LMG 22953 / PM1).